Consider the following 1073-residue polypeptide: Probable inorganic carbon transporter subunit DabA 2 (1073 aa).

Positions 1 to 20 are enriched in polar residues; the sequence is MSSGNTSSQNHSPVNNQPTR. Residues 1 to 35 form a disordered region; it reads MSSGNTSSQNHSPVNNQPTRLKSPLPALHKDTQPN. Cys-535, Asp-537, His-721, and Cys-736 together coordinate Zn(2+).

The protein belongs to the inorganic carbon transporter (TC 9.A.2) DabA family. In terms of assembly, forms a complex with DabB. It depends on Zn(2+) as a cofactor.

Its subcellular location is the cell inner membrane. Part of an energy-coupled inorganic carbon pump. This Rhodopirellula baltica (strain DSM 10527 / NCIMB 13988 / SH1) protein is Probable inorganic carbon transporter subunit DabA 2.